Reading from the N-terminus, the 321-residue chain is D-alanine--D-alanine ligase (321 aa).

The 195-residue stretch at 121–315 (RSCFLKNNIN…FTNLIEEIIK (195 aa)) folds into the ATP-grasp domain. 148 to 199 (MKRPYVIKPLKQGSSIGVEVIFEEDDFHFIDYDFPYGEDIIIEQYIQGQELQ) is a binding site for ATP. Mg(2+)-binding residues include glutamate 268, glutamate 282, and asparagine 284.

The protein belongs to the D-alanine--D-alanine ligase family. The cofactor is Mg(2+). Mn(2+) is required as a cofactor.

Its subcellular location is the cytoplasm. It carries out the reaction 2 D-alanine + ATP = D-alanyl-D-alanine + ADP + phosphate + H(+). It participates in cell wall biogenesis; peptidoglycan biosynthesis. Its function is as follows. Cell wall formation. This is D-alanine--D-alanine ligase from Rickettsia typhi (strain ATCC VR-144 / Wilmington).